We begin with the raw amino-acid sequence, 274 residues long: Protein RecA (274 aa).

43–50 provides a ligand contact to ATP; that stretch reads GPESSGKT.

This sequence belongs to the RecA family.

The protein resides in the cytoplasm. Can catalyze the hydrolysis of ATP in the presence of single-stranded DNA, the ATP-dependent uptake of single-stranded DNA by duplex DNA, and the ATP-dependent hybridization of homologous single-stranded DNAs. It interacts with LexA causing its activation and leading to its autocatalytic cleavage. The protein is Protein RecA of Neisseria flavescens.